Here is a 603-residue protein sequence, read N- to C-terminus: NADPH-dependent diflavin oxidoreductase 1 (603 aa).

In terms of domain architecture, Flavodoxin-like spans 10–155 (VTILYGSETG…YYSEWETNLL (146 aa)). Residues 16–21 (SETGNA), 64–67 (STTG), 102–111 (IGDSSYPKFN), and Glu-137 each bind FMN. The FAD-binding FR-type domain occupies 209-451 (TNLLLGSVKA…HKSNLKFELP (243 aa)). FAD-binding positions include Arg-359, 390-393 (RLFS), and 422-425 (GLCT). NADP(+) is bound by residues Thr-465 and 521 to 522 (SR). Trp-603 contacts FAD.

This sequence belongs to the NADPH-dependent diflavin oxidoreductase NDOR1 family. It in the N-terminal section; belongs to the flavodoxin family. The protein in the C-terminal section; belongs to the flavoprotein pyridine nucleotide cytochrome reductase family. In terms of assembly, interacts with DRE2; as part of the cytosolic iron-sulfur (Fe-S) protein assembly (CIA) machinery. Requires FAD as cofactor. FMN serves as cofactor.

It localises to the cytoplasm. The protein localises to the mitochondrion. The enzyme catalyses 2 oxidized [2Fe-2S]-[protein] + NADPH = 2 reduced [2Fe-2S]-[protein] + NADP(+) + H(+). NADPH-dependent reductase which is a central component of the cytosolic iron-sulfur (Fe-S) protein assembly (CIA) machinery. Transfers electrons from NADPH via its FAD and FMN prosthetic groups to the [2Fe-2S] cluster of DRE2, another key component of the CIA machinery. In turn, this reduced cluster provides electrons for assembly of cytosolic iron-sulfur cluster proteins. Positively controls H(2)O(2)-induced cell death. This Debaryomyces hansenii (strain ATCC 36239 / CBS 767 / BCRC 21394 / JCM 1990 / NBRC 0083 / IGC 2968) (Yeast) protein is NADPH-dependent diflavin oxidoreductase 1.